The sequence spans 716 residues: Pyruvate/proton symporter BtsT (716 aa).

Topologically, residues Met-1–Lys-5 are cytoplasmic. A helical transmembrane segment spans residues Ile-6–Val-26. The Periplasmic segment spans residues Ala-27–Arg-30. A helical membrane pass occupies residues Gly-31 to Tyr-51. The Cytoplasmic portion of the chain corresponds to Arg-52 to Tyr-88. A helical membrane pass occupies residues Val-89–Leu-109. The Periplasmic portion of the chain corresponds to Ala-110–Thr-119. The helical transmembrane segment at Leu-120 to Ile-140 threads the bilayer. The Cytoplasmic portion of the chain corresponds to Ser-141–Thr-163. The helical transmembrane segment at Ile-164 to Val-184 threads the bilayer. Residues Val-185–Ser-191 are Periplasmic-facing. A helical membrane pass occupies residues Pro-192–Met-212. Over Arg-213–Glu-222 the chain is Cytoplasmic. The helical transmembrane segment at Val-223 to His-243 threads the bilayer. Over Asp-244–Thr-257 the chain is Periplasmic. The chain crosses the membrane as a helical span at residues Ile-258–Leu-278. Residues Ala-279–Asp-282 are Cytoplasmic-facing. Residues Tyr-283 to Leu-303 traverse the membrane as a helical segment. Residues Asn-304–Ala-326 lie on the Periplasmic side of the membrane. The chain crosses the membrane as a helical span at residues Leu-327 to Ile-347. Topologically, residues Ser-348 to Ser-374 are cytoplasmic. The helical transmembrane segment at Phe-375–Met-395 threads the bilayer. Residues Asn-396–Ala-484 are Periplasmic-facing. The helical transmembrane segment at Asp-485 to Leu-505 threads the bilayer. At Asp-506 to Asp-531 the chain is on the cytoplasmic side. Residues Ser-532–Tyr-552 traverse the membrane as a helical segment. Topologically, residues Gln-553–Leu-568 are periplasmic. A helical transmembrane segment spans residues Phe-569–Ile-589. At Lys-590–Tyr-596 the chain is on the cytoplasmic side. Residues Ile-597–Leu-617 traverse the membrane as a helical segment. Residues Lys-618–Ser-668 are Periplasmic-facing. The helical transmembrane segment at Ile-669–Val-689 threads the bilayer. Residues Arg-690 to His-716 are Cytoplasmic-facing. Positions Thr-696–His-716 are disordered.

It belongs to the peptide transporter carbon starvation (CstA) (TC 2.A.114) family. Interacts with BtsS and YpdA.

It is found in the cell inner membrane. The enzyme catalyses pyruvate(out) + H(+)(out) = pyruvate(in) + H(+)(in). With respect to regulation, transport is inhibited by the protonophores 2,4-dinitrophenol (DNP) and carbonyl cyanide m-chlorophenyl hydrazone (CCCP), but not by ionophores such as valinomycin, nonactin and nigericin. Functionally, transports pyruvate with a high affinity and specificity. The process is driven by the proton motive force. Under nutrient limiting conditions, mediates the uptake of pyruvate, thus enabling it to be used as a carbon source for the growth and survival. Part of a nutrient-sensing regulatory network composed of the two-component regulatory systems BtsS/BtsR and YpdA/YpdB, and their respective target proteins, BtsT and YhjX. This chain is Pyruvate/proton symporter BtsT, found in Escherichia coli (strain K12).